Reading from the N-terminus, the 37-residue chain is Large ribosomal subunit protein bL36A (37 aa).

It belongs to the bacterial ribosomal protein bL36 family.

The chain is Large ribosomal subunit protein bL36A from Leifsonia xyli subsp. xyli (strain CTCB07).